The sequence spans 438 residues: Ribosomal protein uS12 methylthiotransferase RimO (438 aa).

The MTTase N-terminal domain occupies 1-116 (MNVGFISLGC…IWKEIENLLD (116 aa)). [4Fe-4S] cluster is bound by residues C10, C46, C79, C147, C151, and C154. One can recognise a Radical SAM core domain in the interval 133-363 (TTGSNMAYLK…MALQEKISRE (231 aa)). The TRAM domain maps to 366–435 (EQKVGNVYKV…DYDLFGELYT (70 aa)).

It belongs to the methylthiotransferase family. RimO subfamily. Requires [4Fe-4S] cluster as cofactor.

It localises to the cytoplasm. The catalysed reaction is L-aspartate(89)-[ribosomal protein uS12]-hydrogen + (sulfur carrier)-SH + AH2 + 2 S-adenosyl-L-methionine = 3-methylsulfanyl-L-aspartate(89)-[ribosomal protein uS12]-hydrogen + (sulfur carrier)-H + 5'-deoxyadenosine + L-methionine + A + S-adenosyl-L-homocysteine + 2 H(+). Functionally, catalyzes the methylthiolation of an aspartic acid residue of ribosomal protein uS12. This is Ribosomal protein uS12 methylthiotransferase RimO from Alkaliphilus oremlandii (strain OhILAs) (Clostridium oremlandii (strain OhILAs)).